A 487-amino-acid chain; its full sequence is MPN domain-containing protein (487 aa).

Residues Met-1–Ala-55 are disordered. Ala-2 carries the post-translational modification N-acetylalanine. A Phosphoserine modification is found at Ser-8. The span at Glu-15–Asp-28 shows a compositional bias: acidic residues. Positions Thr-33–Ala-55 are enriched in gly residues. The region spanning Thr-61–His-156 is the RAMA domain. Residues Ser-113, Ser-115, and Trp-135 each contribute to the DNA site. Residues Ala-163–Met-217 are disordered. Residues Ser-168 and Ser-171 each carry the phosphoserine modification. Acidic residues predominate over residues Glu-172–Val-187. Residues Val-258 to Val-393 form the MPN domain. Residues His-335, His-337, and Asp-348 each contribute to the Zn(2+) site. The short motif at His-335 to Asp-348 is the JAMM motif element.

This sequence belongs to the peptidase M67 family. Monomer. Mainly monomoric, but when binds to dsDNA, forms homotetramer assembled into two homodimers. May interact with histones; this interaction is facilitated by. Post-translationally, degraded following binding to N(6)-methyladenosine methylated DNA (m6A).

Its function is as follows. Probable protease. Acts as a sensor of N(6)-methyladenosine methylation on DNA (m6A): recognizes and binds m6A DNA, leading to its degradation. Binds only double strand DNA (dsDNA) in a sequence-independent manner. The sequence is that of MPN domain-containing protein from Mus musculus (Mouse).